A 659-amino-acid chain; its full sequence is Exoribonuclease 2 (659 aa).

Residues 189-531 (RENLTALHFV…NHRLIKAVLA (343 aa)) form the RNB domain. The 83-residue stretch at 576 to 658 (NVEFNAEVQD…ATRSIVGEIL (83 aa)) folds into the S1 motif domain.

This sequence belongs to the RNR ribonuclease family. RNase II subfamily.

Its subcellular location is the cytoplasm. It catalyses the reaction Exonucleolytic cleavage in the 3'- to 5'-direction to yield nucleoside 5'-phosphates.. In terms of biological role, involved in mRNA degradation. Hydrolyzes single-stranded polyribonucleotides processively in the 3' to 5' direction. The chain is Exoribonuclease 2 from Haemophilus influenzae (strain 86-028NP).